The chain runs to 330 residues: GTPase Obg (330 aa).

The region spanning 1–159 (MHFIDEVKIY…MWIHLSLKLL (159 aa)) is the Obg domain. One can recognise an OBG-type G domain in the interval 160–327 (SDVGLVGLPN…IVKLALETIK (168 aa)). GTP-binding positions include 166–173 (GLPNAGKS), 191–195 (FTTLV), 212–215 (DIPG), 279–282 (NKCD), and 308–310 (STC). 2 residues coordinate Mg(2+): serine 173 and threonine 193.

This sequence belongs to the TRAFAC class OBG-HflX-like GTPase superfamily. OBG GTPase family. As to quaternary structure, monomer. Mg(2+) serves as cofactor.

It is found in the cytoplasm. Its function is as follows. An essential GTPase which binds GTP, GDP and possibly (p)ppGpp with moderate affinity, with high nucleotide exchange rates and a fairly low GTP hydrolysis rate. Plays a role in control of the cell cycle, stress response, ribosome biogenesis and in those bacteria that undergo differentiation, in morphogenesis control. The sequence is that of GTPase Obg from Rickettsia conorii (strain ATCC VR-613 / Malish 7).